The chain runs to 329 residues: UPF0421 protein SH1063 (329 aa).

Helical transmembrane passes span 25-45 (LFCLMLDLTPIFAILTAIVTI), 60-80 (LPATVIGALFAVLFTFIFGDP), 87-107 (FSALFTILVCTKLNLQVGTTV), 108-128 (AVLTSVAMIPGIHDAYLFNFF), and 131-151 (LLTALIGLVTAGLVNFIVLPP).

Belongs to the UPF0421 family.

It localises to the cell membrane. The polypeptide is UPF0421 protein SH1063 (Staphylococcus haemolyticus (strain JCSC1435)).